A 675-amino-acid chain; its full sequence is tRNA 5-methylaminomethyl-2-thiouridine biosynthesis bifunctional protein MnmC (675 aa).

The tRNA (mnm(5)s(2)U34)-methyltransferase stretch occupies residues M1–P245. An FAD-dependent cmnm(5)s(2)U34 oxidoreductase region spans residues I271–D675.

In the N-terminal section; belongs to the methyltransferase superfamily. tRNA (mnm(5)s(2)U34)-methyltransferase family. It in the C-terminal section; belongs to the DAO family. FAD serves as cofactor.

It localises to the cytoplasm. It carries out the reaction 5-aminomethyl-2-thiouridine(34) in tRNA + S-adenosyl-L-methionine = 5-methylaminomethyl-2-thiouridine(34) in tRNA + S-adenosyl-L-homocysteine + H(+). Catalyzes the last two steps in the biosynthesis of 5-methylaminomethyl-2-thiouridine (mnm(5)s(2)U) at the wobble position (U34) in tRNA. Catalyzes the FAD-dependent demodification of cmnm(5)s(2)U34 to nm(5)s(2)U34, followed by the transfer of a methyl group from S-adenosyl-L-methionine to nm(5)s(2)U34, to form mnm(5)s(2)U34. The protein is tRNA 5-methylaminomethyl-2-thiouridine biosynthesis bifunctional protein MnmC of Pectobacterium atrosepticum (strain SCRI 1043 / ATCC BAA-672) (Erwinia carotovora subsp. atroseptica).